Consider the following 397-residue polypeptide: MNFNKFYNKFHDEPIDCENFPDIGQIKSTSVGSGGSDNIVLIVVQDNIKYAVKIIPTLFYPKYKEQPNDDQMEIKFYQFFTKRYILTDRTPHIVGIYKCKTCDNIRDFLLKIKPKKSCPTFEEKLLKKVQYTQFENQLCNLLLYGENKLMDSKFIMALLEYCDFDFSRYLRDLLQNVYQNNFGNNIGEFFYELTRILFQIIFTLAIIQDDYPGFQHSDLFIRNILISITDKYTDNEYVAYYYKQKIFYLPANGIYAKINDFGTSIIVNELESNTYIYDKQTNKIFHKNPFNHKNDIYNLLIDIYFAFDEYIIENKLDESKINPIINFMDKFIDIETINKIFEINYYQLKDTWYIDGISVLENTIKTPHDYIMSDVFEVFQDLPANAKIIRHFNSPRL.

In terms of domain architecture, Protein kinase spans 25-397 (QIKSTSVGSG…IIRHFNSPRL (373 aa)). ATP contacts are provided by residues 31–39 (VGSGGSDNI) and Lys-53. Residue Asp-218 is the Proton acceptor of the active site.

The protein belongs to the protein kinase superfamily. Ser/Thr protein kinase family.

It is found in the virion. It catalyses the reaction L-seryl-[protein] + ATP = O-phospho-L-seryl-[protein] + ADP + H(+). The enzyme catalyses L-threonyl-[protein] + ATP = O-phospho-L-threonyl-[protein] + ADP + H(+). This chain is Putative serine/threonine-protein kinase R301, found in Acanthamoeba polyphaga (Amoeba).